Here is a 232-residue protein sequence, read N- to C-terminus: 5'-methylthioadenosine/S-adenosylhomocysteine nucleosidase (232 aa).

Glu12 serves as the catalytic Proton acceptor. Substrate-binding positions include Gly78, Ile152, and 173-174 (ME). Catalysis depends on Asp197, which acts as the Proton donor.

Belongs to the PNP/UDP phosphorylase family. MtnN subfamily. In terms of assembly, homodimer.

It carries out the reaction S-adenosyl-L-homocysteine + H2O = S-(5-deoxy-D-ribos-5-yl)-L-homocysteine + adenine. The enzyme catalyses S-methyl-5'-thioadenosine + H2O = 5-(methylsulfanyl)-D-ribose + adenine. The catalysed reaction is 5'-deoxyadenosine + H2O = 5-deoxy-D-ribose + adenine. Its pathway is amino-acid biosynthesis; L-methionine biosynthesis via salvage pathway; S-methyl-5-thio-alpha-D-ribose 1-phosphate from S-methyl-5'-thioadenosine (hydrolase route): step 1/2. In terms of biological role, catalyzes the irreversible cleavage of the glycosidic bond in both 5'-methylthioadenosine (MTA) and S-adenosylhomocysteine (SAH/AdoHcy) to adenine and the corresponding thioribose, 5'-methylthioribose and S-ribosylhomocysteine, respectively. Also cleaves 5'-deoxyadenosine, a toxic by-product of radical S-adenosylmethionine (SAM) enzymes, into 5-deoxyribose and adenine. Thus, is required for in vivo function of the radical SAM enzymes biotin synthase and lipoic acid synthase, that are inhibited by 5'-deoxyadenosine accumulation. The protein is 5'-methylthioadenosine/S-adenosylhomocysteine nucleosidase of Salmonella arizonae (strain ATCC BAA-731 / CDC346-86 / RSK2980).